The sequence spans 1286 residues: Protein patched (1286 aa).

At 1 to 76 (MDRDSLPRVP…GSSVQKHAGK (76 aa)) the chain is on the cytoplasmic side. The chain crosses the membrane as a helical span at residues 77–92 (VLFVAILVLSTFCVGL). Topologically, residues 93-427 (KSAQIHSKVH…DDILAKFSHP (335 aa)) are extracellular. 4 N-linked (GlcNAc...) asparagine glycosylation sites follow: asparagine 142, asparagine 298, asparagine 335, and asparagine 388. A helical transmembrane segment spans residues 428–448 (SALSIVIGVAVTVLYAFCTLL). The 156-residue stretch at 428 to 583 (SALSIVIGVA…LLVFPAMISL (156 aa)) folds into the SSD domain. Residues 449-465 (RWRDPVRGQSSVGVAGV) are Cytoplasmic-facing. The chain crosses the membrane as a helical span at residues 466-486 (LLMCFSTAAGLGLSALLGIVF). At 487–492 (NAASTQ) the chain is on the extracellular side. A helical transmembrane segment spans residues 493–511 (VVPFLALGLGVDHIFMLTA). Residues 512-532 (AYAESNRREQTKLILKKVGPS) lie on the Cytoplasmic side of the membrane. A helical membrane pass occupies residues 533–553 (ILFSACSTAGSFFAAAFIPVP). Residues 554–562 (ALKVFCLQA) are Extracellular-facing. A helical membrane pass occupies residues 563–583 (AIVMCSNLAAALLVFPAMISL). The Cytoplasmic segment spans residues 584-677 (DLRRRTAGRA…QHYTPFLMRS (94 aa)). A helical transmembrane segment spans residues 678–699 (WVKFLTVMGFLAALISSLYAST). The Extracellular segment spans residues 700–931 (RLQDGLDIID…IRDLSVKYEG (232 aa)). A glycan (N-linked (GlcNAc...) asparagine) is linked at asparagine 807. Residues 932–952 (FGLPNYPSGIPFIFWEQYMTL) traverse the membrane as a helical segment. The Cytoplasmic portion of the chain corresponds to 953 to 955 (RSS). Residues 956–976 (LAMILACVLLAALVLVSLLLL) form a helical membrane-spanning segment. The Extracellular segment spans residues 977 to 1007 (SVWAAVLVILSVLASLAQIFGAMTLLGIKLS). The chain crosses the membrane as a helical span at residues 1008 to 1028 (AIPAVILILSVGMMLCFNVLI). At 1029 to 1056 (SLGFMTSVGNRQRRVQLSMQMSLGPLVH) the chain is on the cytoplasmic side. A helical transmembrane segment spans residues 1057–1077 (GMLTSGVAVFMLSTSPFEFVI). The Extracellular segment spans residues 1078-1082 (RHFCW). A helical transmembrane segment spans residues 1083–1103 (LLLVVLCVGACNSLLVFPILL). Topologically, residues 1104-1286 (SMVGPEAELV…RAVRSYNFTS (183 aa)) are cytoplasmic. The interval 1116-1237 (EHPDRISTPS…PPPFPTAYPP (122 aa)) is disordered. Composition is skewed to polar residues over residues 1141–1152 (VQGSRSSRGSCQ) and 1165–1191 (PSLT…NDWT). Low complexity predominate over residues 1199–1216 (PASYAAPPPAYHKAAAQQ). Pro residues predominate over residues 1224 to 1235 (PTTPPPPFPTAY).

It belongs to the patched family. As to quaternary structure, interacts (via C-terminal cytoplasmic region) with CG5504/l(2)tid; the interaction is probably direct. Interacts with hh/hedgehog.

The protein resides in the membrane. In terms of biological role, segmentation polarity protein. Acts as a receptor for the hedgehog protein (hh). Associates with the smoothened protein (SMO) to transduce the hedgehog signal leading to the activation of wingless, decapentaplegic and patched itself. Participates in cell interactions that establish pattern within the segment and the imaginal disks during development. In the absence of HH, represses the constitutive signaling activity of smo through fused (FU). In Drosophila melanogaster (Fruit fly), this protein is Protein patched.